A 341-amino-acid polypeptide reads, in one-letter code: Serine proteinase inhibitor 2 (341 aa).

It belongs to the serpin family. Poxviruses subfamily.

The protein localises to the host cytoplasm. In terms of biological role, viral serpin that inhibits both cysteine and serine proteinases involved in the regulation of host inflammatory and apoptosis processes. Major anti-apoptotic protein which inhibits both intrinsic and extrinsic pathways and strongly cleaves host CASP1 and CASP8 but is a rather poor inhibitor of host CASP3. Prevents the proteolytic activity of host interleukin-1-beta converting enzyme (ICE) and ICE-like enzymes. Can also block apoptosis through host tumor necrosis factor (TNF) receptor. This is Serine proteinase inhibitor 2 (OPG199) from Bos taurus (Bovine).